The chain runs to 95 residues: UPF0473 protein CD630_12860 (95 aa).

Belongs to the UPF0473 family.

The polypeptide is UPF0473 protein CD630_12860 (Clostridioides difficile (strain 630) (Peptoclostridium difficile)).